Here is a 188-residue protein sequence, read N- to C-terminus: Adenine phosphoribosyltransferase (188 aa).

This sequence belongs to the purine/pyrimidine phosphoribosyltransferase family. As to quaternary structure, homodimer.

The protein localises to the cytoplasm. It carries out the reaction AMP + diphosphate = 5-phospho-alpha-D-ribose 1-diphosphate + adenine. It functions in the pathway purine metabolism; AMP biosynthesis via salvage pathway; AMP from adenine: step 1/1. Catalyzes a salvage reaction resulting in the formation of AMP, that is energically less costly than de novo synthesis. The polypeptide is Adenine phosphoribosyltransferase (Burkholderia cenocepacia (strain HI2424)).